The chain runs to 202 residues: dITP/XTP pyrophosphatase (202 aa).

Residue 11 to 16 (TNNANK) coordinates substrate. Asp-73 functions as the Proton acceptor in the catalytic mechanism. Mg(2+) is bound at residue Asp-73. Substrate is bound by residues Ser-74, 155 to 158 (FGYD), Lys-178, and 183 to 184 (HR).

Belongs to the HAM1 NTPase family. As to quaternary structure, homodimer. The cofactor is Mg(2+).

The enzyme catalyses XTP + H2O = XMP + diphosphate + H(+). The catalysed reaction is dITP + H2O = dIMP + diphosphate + H(+). It carries out the reaction ITP + H2O = IMP + diphosphate + H(+). Its function is as follows. Pyrophosphatase that catalyzes the hydrolysis of nucleoside triphosphates to their monophosphate derivatives, with a high preference for the non-canonical purine nucleotides XTP (xanthosine triphosphate), dITP (deoxyinosine triphosphate) and ITP. Seems to function as a house-cleaning enzyme that removes non-canonical purine nucleotides from the nucleotide pool, thus preventing their incorporation into DNA/RNA and avoiding chromosomal lesions. This is dITP/XTP pyrophosphatase from Lactiplantibacillus plantarum (strain ATCC BAA-793 / NCIMB 8826 / WCFS1) (Lactobacillus plantarum).